Reading from the N-terminus, the 772-residue chain is Mitochondrial intermediate peptidase (772 aa).

The N-terminal 37 residues, 1-37 (MLRTIILKAGSNASIPSLSRQNKLLRFFATAGAVSRT), are a transit peptide targeting the mitochondrion. A Zn(2+)-binding site is contributed by H558. The active site involves E559. 2 residues coordinate Zn(2+): H562 and H565.

Belongs to the peptidase M3 family. Zn(2+) is required as a cofactor.

It is found in the mitochondrion matrix. The enzyme catalyses Release of an N-terminal octapeptide as second stage of processing of some proteins imported into the mitochondrion.. Stimulated by Fe(2+). In terms of biological role, cleaves proteins, imported into the mitochondrion, to their mature size. While most mitochondrial precursor proteins are processed to the mature form in one step by mitochondrial processing peptidase (MPP), the sequential cleavage by MIP of an octapeptide after initial processing by MPP is a required step for a subgroup of nuclear-encoded precursor proteins destined for the matrix or the inner membrane. Cleaves precursor proteins of respiratory components, including subunits of the electron transport chain and tricarboxylic acid cycle enzymes, and components of the mitochondrial genetic machinery, including ribosomal proteins, translation factors, and proteins required for mitochondrial DNA metabolism. The polypeptide is Mitochondrial intermediate peptidase (OCT1) (Saccharomyces cerevisiae (strain YJM789) (Baker's yeast)).